Reading from the N-terminus, the 648-residue chain is Threonine--tRNA ligase (648 aa).

A TGS domain is found at 1–61; sequence MIKITLPDGS…TTDGNLILYT (61 aa). The segment at 240 to 539 is catalytic; that stretch reads DHRKLGKELE…LLEHTAGNFP (300 aa). Zn(2+) is bound by residues Cys335, His386, and His516.

The protein belongs to the class-II aminoacyl-tRNA synthetase family. As to quaternary structure, homodimer. Requires Zn(2+) as cofactor.

The protein resides in the cytoplasm. It carries out the reaction tRNA(Thr) + L-threonine + ATP = L-threonyl-tRNA(Thr) + AMP + diphosphate + H(+). Its function is as follows. Catalyzes the attachment of threonine to tRNA(Thr) in a two-step reaction: L-threonine is first activated by ATP to form Thr-AMP and then transferred to the acceptor end of tRNA(Thr). Also edits incorrectly charged L-seryl-tRNA(Thr). This Flavobacterium johnsoniae (strain ATCC 17061 / DSM 2064 / JCM 8514 / BCRC 14874 / CCUG 350202 / NBRC 14942 / NCIMB 11054 / UW101) (Cytophaga johnsonae) protein is Threonine--tRNA ligase.